Consider the following 751-residue polypeptide: Catalase-peroxidase 1 (751 aa).

Positions 1–11 are enriched in basic and acidic residues; it reads MTDKQHTRSVS. The interval 1–31 is disordered; it reads MTDKQHTRSVSESENPAIPSPTPKVSRPRRN. Residues 103 to 225 constitute a cross-link (tryptophyl-tyrosyl-methioninium (Trp-Tyr) (with M-251)); sequence WHAAGTYRIA…LANVQMGLIY (123 aa). The active-site Proton acceptor is H104. Residues 225-251 constitute a cross-link (tryptophyl-tyrosyl-methioninium (Tyr-Met) (with W-103)); that stretch reads YVNPEGPGGNPDPLAAARDIRETFARM. Residue H266 coordinates heme b. The interval 345–375 is disordered; it reads AGAKQWKPKNPEANDTVPDAHGASRRHSPTM.

Belongs to the peroxidase family. Peroxidase/catalase subfamily. In terms of assembly, homodimer or homotetramer. Heme b is required as a cofactor. In terms of processing, formation of the three residue Trp-Tyr-Met cross-link is important for the catalase, but not the peroxidase activity of the enzyme.

It catalyses the reaction H2O2 + AH2 = A + 2 H2O. It carries out the reaction 2 H2O2 = O2 + 2 H2O. Functionally, bifunctional enzyme with both catalase and broad-spectrum peroxidase activity. The polypeptide is Catalase-peroxidase 1 (Cupriavidus pinatubonensis (strain JMP 134 / LMG 1197) (Cupriavidus necator (strain JMP 134))).